A 1068-amino-acid chain; its full sequence is Putative protein TIC 214 N-terminal part (1068 aa).

Helical transmembrane passes span 11 to 31, 68 to 88, 92 to 112, 131 to 151, 166 to 186, and 213 to 233; these read VLWV…LFGI, ITGQ…VLLI, LLTL…KDLI, IFFD…SPVL, FIFL…FVSL, and FSII…VPFI.

Belongs to the TIC214 family. As to quaternary structure, part of the Tic complex.

The protein resides in the plastid. Its subcellular location is the chloroplast inner membrane. Functionally, involved in protein precursor import into chloroplasts. May be part of an intermediate translocation complex acting as a protein-conducting channel at the inner envelope. In Marchantia polymorpha (Common liverwort), this protein is Putative protein TIC 214 N-terminal part.